The primary structure comprises 762 residues: 1-phosphatidylinositol 4,5-bisphosphate phosphodiesterase delta-4 (762 aa).

In terms of domain architecture, PH spans 16-124 (LLMQEGMPMR…WMRGLQLLVD (109 aa)). Residues 26–53 (KVRSKSWKKLRYFRLQNDGMTVWHARQA) are substrate binding. EF-hand domains follow at residues 134-169 (RLDQ…MNVE), 170-205 (MDQE…LTKR), and 206-237 (AEVQ…EQKE). Positions 147, 149, 151, 153, 158, 183, 185, 187, 189, and 194 each coordinate Ca(2+). Positions 213-243 (ESFSADGQKLTLLEFLDFLREEQKERDCTSE) match the GBA motif. The PI-PLC X-box domain occupies 290 to 435 (QDMTQPLNHY…LRRRILVKGK (146 aa)). Residue H305 is part of the active site. Residues N306, E335, and D337 each coordinate Ca(2+). H350 is an active-site residue. E384 is a Ca(2+) binding site. Residues K433 and K435 each contribute to the substrate site. The segment covering 443–471 (LEYEEEEAEPELEESELALESQFETEPEP) has biased composition (acidic residues). Positions 443-483 (LEYEEEEAEPELEESELALESQFETEPEPQEQNLQSKDKKK) are disordered. Phosphoserine is present on S457. The 117-residue stretch at 493-609 (LSSLVIYLKS…GYVLKPDFLR (117 aa)) folds into the PI-PLC Y-box domain. Substrate-binding residues include S522 and R549. Residues 609–736 (RDIQSSFHPE…QGYRHIHLLS (128 aa)) form the C2 domain. Residues I650, D652, N676, D705, Y706, and D707 each contribute to the Ca(2+) site. The PDZ-binding signature appears at 731–734 (HIHL).

Interacts with GRIP1. Interacts (via GBA motif) with guanine nucleotide-binding protein G(i) alpha subunit GNAI3 (inactive GDP-bound form); low-affinity interaction. Ca(2+) is required as a cofactor.

It localises to the membrane. The protein localises to the nucleus. Its subcellular location is the cytoplasm. The protein resides in the endoplasmic reticulum. The catalysed reaction is a 1,2-diacyl-sn-glycero-3-phospho-(1D-myo-inositol-4,5-bisphosphate) + H2O = 1D-myo-inositol 1,4,5-trisphosphate + a 1,2-diacyl-sn-glycerol + H(+). It carries out the reaction a 1,2-diacyl-sn-glycero-3-phospho-(1D-myo-inositol) + H2O = 1D-myo-inositol 1-phosphate + a 1,2-diacyl-sn-glycerol + H(+). Hydrolyzes the phosphatidylinositol 4,5-bisphosphate (PIP2) to generate 2 second messenger molecules diacylglycerol (DAG) and inositol 1,4,5-trisphosphate (IP3). DAG mediates the activation of protein kinase C (PKC), while IP3 releases Ca(2+) from intracellular stores. Required for acrosome reaction in sperm during fertilization, probably by acting as an important enzyme for intracellular Ca(2+) mobilization in the zona pellucida-induced acrosome reaction. May play a role in cell growth. Modulates the liver regeneration in cooperation with nuclear PKC. Overexpression up-regulates the Erk signaling pathway and proliferation. The sequence is that of 1-phosphatidylinositol 4,5-bisphosphate phosphodiesterase delta-4 (PLCD4) from Pongo abelii (Sumatran orangutan).